A 435-amino-acid polypeptide reads, in one-letter code: MPDRDSYANGTGSSGGGPGGGGSEEASGAGTGSGGATSDAICRDFLRNVCKRGKRCRYRHPDMSEVSNLGVSKNEFIFCHDFQNKECSRPNCRFIHGSKEDEDGYKKTGELPPRLRQKVAAGLGLSPADLPNGKEEVPICRDFLKGDCQRGAKCKFRHLQRDFEFDARGGGGTGGGGSTGSAPPGRRHDLYDIYDLPERGFEDHEPGPKRRRGGCCPPDGPHFESYECNLAPLRGVECRLLEEENALLRKRVEELKKQVSNLLATNEVLLEQNAQFRNQAKVMTLSSTAPATEQTLAPTVGTVATFNHGIAQTHTTLSSQALQPRPVSQQELVAPTGAPAAPPTNAAPPAAPPPPPPHLNPEITPLSAALAQTIAQGMAPPPVSMAPVAVSVAPVAPVAVSMAQPLAGITMSHTTTPMVTYPIASQSMRITAMPH.

The segment at 1–36 is disordered; sequence MPDRDSYANGTGSSGGGPGGGGSEEASGAGTGSGGA. Residues 12-35 are compositionally biased toward gly residues; it reads GSSGGGPGGGGSEEASGAGTGSGG. 3 C3H1-type zinc fingers span residues 36–63, 73–99, and 134–161; these read ATSD…HPDM, KNEF…HGSK, and KEEV…HLQR. Positions 166-190 are disordered; sequence DARGGGGTGGGGSTGSAPPGRRHDL. Residues 168–179 show a composition bias toward gly residues; sequence RGGGGTGGGGST. Omega-N-methylarginine is present on residues Arg-186 and Arg-187. The stretch at 235–281 forms a coiled coil; it reads GVECRLLEEENALLRKRVEELKKQVSNLLATNEVLLEQNAQFRNQAK. The span at 315-331 shows a compositional bias: polar residues; the sequence is TTLSSQALQPRPVSQQE. A disordered region spans residues 315–363; sequence TTLSSQALQPRPVSQQELVAPTGAPAAPPTNAAPPAAPPPPPPHLNPEI. Over residues 340 to 359 the composition is skewed to pro residues; it reads AAPPTNAAPPAAPPPPPPHL.

The protein resides in the nucleus. Its function is as follows. Specific regulator of miRNA biogenesis. Binds, via the C3H1-type zinc finger domains, to the binding motif 5'-GCAGCGC-3' on microRNA pri-MIR143 and negatively regulates the processing to mature microRNA. This chain is Zinc finger CCCH domain-containing protein 10 (Zc3h10), found in Mus musculus (Mouse).